The sequence spans 511 residues: Endoglucanase B (511 aa).

The N-terminal stretch at 1–29 (MNLLSGWVRPLMLGCGLLGAALSAGSIQA) is a signal peptide. The CBM2 domain maps to 30–130 (AVCEYRVTNE…AVTGAICGGQ (101 aa)). A disulfide bond links C32 and C127. Residues 137-173 (SVASSSSSSSVVSSTPRSSSSSVSSSVPGTSSSSSSS) form a disordered region. Residues 180–209 (ACNWYGTLTPLCNNTSNGWGYEDGRSCVAR) form the CBM10 domain. 2 cysteine pairs are disulfide-bonded: C181-C212 and C191-C206. The active-site Nucleophile is D276. D393 acts as the Proton donor in catalysis.

Belongs to the glycosyl hydrolase 45 (cellulase K) family.

Its subcellular location is the periplasm. It catalyses the reaction Endohydrolysis of (1-&gt;4)-beta-D-glucosidic linkages in cellulose, lichenin and cereal beta-D-glucans.. This enzyme catalyzes the endohydrolysis of 1,4-beta-glucosidic linkages in cellulose, lichenin and cereal beta-D-glucans. EGB is most active against barley beta-glucan, but showed significant activity against amorphous and crystalline cellulose. The protein is Endoglucanase B (celB) of Cellvibrio japonicus (strain Ueda107) (Pseudomonas fluorescens subsp. cellulosa).